Consider the following 440-residue polypeptide: Protein EFFECTOR OF TRANSCRIPTION (440 aa).

The GIY-YIG domain maps to 131-167; the sequence is SIQGLGVAVNIHDADDISHGQTESIRTRLRSYGRPVP. Residues 172–216 are disordered; it reads LGDNASQTITQKKTGGRSKDKKHGFEEERDVSRVEAEENNTNSVH. Residues 175-184 are compositionally biased toward polar residues; it reads NASQTITQKK. Basic and acidic residues predominate over residues 194-207; that stretch reads HGFEEERDVSRVEA. 2 Cx9Cx9RCx2HK repeats span residues 247–272 and 295–320; these read CGVL…TEHK and CGVI…EDHK. The disordered stretch occupies residues 339–363; sequence ILKEDKSKPKTRTSSTNQEEPGESL. Cx9Cx9RCx2HK repeat units follow at residues 365–390 and 409–434; these read CEAT…WQHK and CGVK…QEHK.

It is found in the nucleus. Its function is as follows. Transcription regulator that negatively modulates gibberellin-mediated developmental processes. May act as transcriptional repressor of giberellin controlled genes. Binds DNA without sequence preference. In Brassica napus (Rape), this protein is Protein EFFECTOR OF TRANSCRIPTION.